The sequence spans 1132 residues: Protein CROWDED NUCLEI 1 (1132 aa).

Positions 1-31 are disordered; sequence MSTPLKVWQRWSTPTKATNPDSNGSSHGTGL. The segment covering 10–28 has biased composition (polar residues); that stretch reads RWSTPTKATNPDSNGSSHG. A coiled-coil region spans residues 73-714; that stretch reads LLIEKKEWSS…KKLKEQREQF (642 aa). 2 consecutive short sequence motifs (nuclear localization signal) follow at residues 379 to 386 and 693 to 700; these read EKREAEWK and IRKDVDDL. 2 positions are modified to phosphoserine: Ser-774 and Ser-803. Residues 849 to 859 are compositionally biased toward basic and acidic residues; the sequence is AESETGTKEVE. Disordered regions lie at residues 849–871, 883–909, 924–1039, and 1061–1132; these read AESE…DQSD, SLSN…TRSV, INLY…VQQE, and GVST…FLTT. The span at 861-871 shows a compositional bias: polar residues; sequence TNVNSDGDQSD. Phosphoserine is present on residues Ser-865 and Ser-883. A compositionally biased stretch (basic residues) spans 895–907; it reads MKGKGKARTRRTR. Ser-908 is modified (phosphoserine). Residues Ser-1093, Ser-1105, and Ser-1112 each carry the phosphoserine modification. The segment covering 1095–1105 has biased composition (basic and acidic residues); that stretch reads DVNKTPLRADS.

It belongs to the CRWN family. Core component of the LINC complex which is composed of inner nuclear membrane SUN domain-containing proteins coupled to outer nuclear membrane WIP and WIT proteins. The LINC complex also involves nucleoskeletal proteins CRWN/LINC and possibly KAKU4 and the cytoskeletal myosin KAKU1. Interacts with SUN1 and SUN2. Binds to KAKU4. Expressed at low levels in roots, leaves, flowers and flower stalks.

The protein resides in the nucleus membrane. Its subcellular location is the nucleus. The protein localises to the nucleoplasm. It localises to the nucleus lamina. Component of SUN-protein-containing multivariate complexes also called LINC complexes which link the nucleoskeleton and cytoskeleton by providing versatile outer nuclear membrane attachment sites for cytoskeletal filaments. Required for nucleus structure organization (e.g. size and shape). In Arabidopsis thaliana (Mouse-ear cress), this protein is Protein CROWDED NUCLEI 1.